Here is a 586-residue protein sequence, read N- to C-terminus: Germ cell nuclear acidic protein (586 aa).

4 disordered regions span residues 17–119, 176–202, 217–266, and 279–318; these read GWDR…LSSE, KAKTVKTPKSVQKTKKPAPSLCNSPVF, TWRT…SSEE, and LGGRTSASPMPSAEPKPQRPCLSTPSATGRKTGSQVPVKD. A compositionally biased stretch (basic and acidic residues) spans 65-76; sequence SGKENRSQEEHI. Over residues 94–107 the composition is skewed to polar residues; that stretch reads TPKSTFKQSASSAQ. Residues 176 to 191 are compositionally biased toward basic residues; that stretch reads KAKTVKTPKSVQKTKK. Basic and acidic residues predominate over residues 225–244; that stretch reads PPSDEHQATSKDREETEKPR. Residues 299–313 are compositionally biased toward polar residues; the sequence is CLSTPSATGRKTGSQ. One can recognise a SprT-like domain in the interval 383-482; it reads KLYQLYNTSV…LYARKAMLAH (100 aa).

This sequence belongs to the serine-aspartate repeat-containing protein (SDr) family.

The protein resides in the nucleus. Its subcellular location is the PML body. It localises to the chromosome. May play a role in DNA-protein cross-links (DPCs) clearance, ensuring the genomic stability by protecting germ cells and early embryos from various sources of damage. In Danio rerio (Zebrafish), this protein is Germ cell nuclear acidic protein (gcna).